The following is a 204-amino-acid chain: 5'-deoxynucleotidase HDDC2 (204 aa).

Position 2 is an N-acetylalanine (Ala-2). 2 positions are modified to phosphoserine: Ser-3 and Ser-5. One can recognise an HD domain in the interval 46–148; sequence VSDHMYRMAV…VKQLDQCEMI (103 aa). A divalent metal cation contacts are provided by His-49, His-77, Asp-78, Glu-81, Asp-86, Ile-87, and Asp-143. Residue Ser-204 is modified to Phosphoserine.

It belongs to the HDDC2 family. In terms of assembly, homodimer. The cofactor is Mn(2+). Co(2+) serves as cofactor. It depends on Mg(2+) as a cofactor.

The catalysed reaction is a 2'-deoxyribonucleoside 5'-phosphate + H2O = a 2'-deoxyribonucleoside + phosphate. Catalyzes the dephosphorylation of the nucleoside 5'-monophosphates deoxyadenosine monophosphate (dAMP), deoxycytidine monophosphate (dCMP), deoxyguanosine monophosphate (dGMP) and deoxythymidine monophosphate (dTMP). The polypeptide is 5'-deoxynucleotidase HDDC2 (HDDC2) (Homo sapiens (Human)).